A 225-amino-acid polypeptide reads, in one-letter code: Cell division protein SepF (225 aa).

Residues 22–116 (EYLDEPEPAR…TRGALAVDTR (95 aa)) form a disordered region. Basic and acidic residues-rich tracts occupy residues 28–54 (EPAR…RDFA) and 77–86 (RYDGPRHSSR).

It belongs to the SepF family. In terms of assembly, homodimer. Interacts with FtsZ.

It localises to the cytoplasm. Cell division protein that is part of the divisome complex and is recruited early to the Z-ring. Probably stimulates Z-ring formation, perhaps through the cross-linking of FtsZ protofilaments. Its function overlaps with FtsA. The protein is Cell division protein SepF of Rhodococcus jostii (strain RHA1).